Consider the following 397-residue polypeptide: Formate-dependent phosphoribosylglycinamide formyltransferase (397 aa).

N(1)-(5-phospho-beta-D-ribosyl)glycinamide-binding positions include 22–23 (EL) and E82. Residues R114, K155, 160-165 (SSGKGQ), 195-198 (EGFV), and E203 each bind ATP. Residues 119–312 (CLAAEELSLP…EFALHARAIL (194 aa)) form the ATP-grasp domain. Mg(2+) contacts are provided by E271 and E283. N(1)-(5-phospho-beta-D-ribosyl)glycinamide is bound by residues D290, K360, and 367–368 (RR).

Belongs to the PurK/PurT family. Homodimer.

It catalyses the reaction N(1)-(5-phospho-beta-D-ribosyl)glycinamide + formate + ATP = N(2)-formyl-N(1)-(5-phospho-beta-D-ribosyl)glycinamide + ADP + phosphate + H(+). The protein operates within purine metabolism; IMP biosynthesis via de novo pathway; N(2)-formyl-N(1)-(5-phospho-D-ribosyl)glycinamide from N(1)-(5-phospho-D-ribosyl)glycinamide (formate route): step 1/1. Functionally, involved in the de novo purine biosynthesis. Catalyzes the transfer of formate to 5-phospho-ribosyl-glycinamide (GAR), producing 5-phospho-ribosyl-N-formylglycinamide (FGAR). Formate is provided by PurU via hydrolysis of 10-formyl-tetrahydrofolate. The sequence is that of Formate-dependent phosphoribosylglycinamide formyltransferase from Alcanivorax borkumensis (strain ATCC 700651 / DSM 11573 / NCIMB 13689 / SK2).